A 197-amino-acid chain; its full sequence is Imidazoleglycerol-phosphate dehydratase (197 aa).

This sequence belongs to the imidazoleglycerol-phosphate dehydratase family.

It is found in the cytoplasm. The catalysed reaction is D-erythro-1-(imidazol-4-yl)glycerol 3-phosphate = 3-(imidazol-4-yl)-2-oxopropyl phosphate + H2O. It functions in the pathway amino-acid biosynthesis; L-histidine biosynthesis; L-histidine from 5-phospho-alpha-D-ribose 1-diphosphate: step 6/9. The polypeptide is Imidazoleglycerol-phosphate dehydratase (Azotobacter vinelandii (strain DJ / ATCC BAA-1303)).